Here is a 530-residue protein sequence, read N- to C-terminus: Glucose-6-phosphate isomerase (530 aa).

Glu322 (proton donor) is an active-site residue. Catalysis depends on residues His351 and Lys455.

The protein belongs to the GPI family.

It is found in the cytoplasm. The enzyme catalyses alpha-D-glucose 6-phosphate = beta-D-fructose 6-phosphate. It functions in the pathway carbohydrate biosynthesis; gluconeogenesis. It participates in carbohydrate degradation; glycolysis; D-glyceraldehyde 3-phosphate and glycerone phosphate from D-glucose: step 2/4. Catalyzes the reversible isomerization of glucose-6-phosphate to fructose-6-phosphate. This Citrifermentans bemidjiense (strain ATCC BAA-1014 / DSM 16622 / JCM 12645 / Bem) (Geobacter bemidjiensis) protein is Glucose-6-phosphate isomerase.